The primary structure comprises 25 residues: Small ribosomal subunit protein eS32 (25 aa).

The disordered stretch occupies residues 1–25 (MRAKWRKKRMRRLKRKRRKMRARSK).

Belongs to the eukaryotic ribosomal protein eS32 family. In terms of assembly, component of the small ribosomal subunit.

The sequence is that of Small ribosomal subunit protein eS32 (RpL41) from Spodoptera frugiperda (Fall armyworm).